Here is a 270-residue protein sequence, read N- to C-terminus: Putative envelope-preserving system protein Rv2743c (270 aa).

Helical transmembrane passes span 50–72 (ALRW…ALLA) and 77–99 (FTSL…TLLL).

In terms of assembly, interacts with PspA and Rv2742c.

The protein resides in the membrane. In terms of biological role, involved in preservation of envelope integrity and tolerance to surface stress. Reverses the inhibitory effect of PspA on ClgR activity. Facilitates intracellular growth of M.tuberculosis. This Mycobacterium tuberculosis (strain ATCC 25618 / H37Rv) protein is Putative envelope-preserving system protein Rv2743c.